The chain runs to 202 residues: Ras-related protein Rab-2B (202 aa).

GTP is bound at residue glycine 31–serine 38. The Effector region signature appears at serine 53–phenylalanine 61. Residues aspartate 79–glutamine 83 and asparagine 137–aspartate 140 contribute to the GTP site.

This sequence belongs to the small GTPase superfamily. Rab family. In terms of processing, this sequence lacks the C-terminal cysteine motifs subject to isoprenylation in other Rab proteins.

The protein is Ras-related protein Rab-2B (rab2B) of Dictyostelium discoideum (Social amoeba).